Here is a 353-residue protein sequence, read N- to C-terminus: Photosystem II D2 protein (353 aa).

Residue Thr2 is modified to N-acetylthreonine. Thr2 carries the post-translational modification Phosphothreonine. The helical transmembrane segment at 41–61 threads the bilayer; that stretch reads CAYFAIGGWFTGTTFVTSWYT. His118 serves as a coordination point for chlorophyll a. Residues 125 to 141 traverse the membrane as a helical segment; the sequence is GFMLRQFELARSVQLRP. Residues Gln130 and Asn143 each coordinate pheophytin a. Residues 153 to 166 form a helical membrane-spanning segment; the sequence is VFVSVFLIYPLGQS. Position 198 (His198) interacts with chlorophyll a. The helical transmembrane segment at 208-228 threads the bilayer; sequence AALLCAIHGATVENTLFEDGD. His215 and Phe262 together coordinate a plastoquinone. Residue His215 participates in Fe cation binding. His269 is a Fe cation binding site. A helical membrane pass occupies residues 279–295; sequence GLWMSALGVVGLALNLR.

The protein belongs to the reaction center PufL/M/PsbA/D family. As to quaternary structure, PSII is composed of 1 copy each of membrane proteins PsbA, PsbB, PsbC, PsbD, PsbE, PsbF, PsbH, PsbI, PsbJ, PsbK, PsbL, PsbM, PsbT, PsbX, PsbY, PsbZ, Psb30/Ycf12, at least 3 peripheral proteins of the oxygen-evolving complex and a large number of cofactors. It forms dimeric complexes. The D1/D2 heterodimer binds P680, chlorophylls that are the primary electron donor of PSII, and subsequent electron acceptors. It shares a non-heme iron and each subunit binds pheophytin, quinone, additional chlorophylls, carotenoids and lipids. There is also a Cl(-1) ion associated with D1 and D2, which is required for oxygen evolution. The PSII complex binds additional chlorophylls, carotenoids and specific lipids. serves as cofactor.

The protein resides in the plastid. Its subcellular location is the chloroplast thylakoid membrane. It carries out the reaction 2 a plastoquinone + 4 hnu + 2 H2O = 2 a plastoquinol + O2. Photosystem II (PSII) is a light-driven water:plastoquinone oxidoreductase that uses light energy to abstract electrons from H(2)O, generating O(2) and a proton gradient subsequently used for ATP formation. It consists of a core antenna complex that captures photons, and an electron transfer chain that converts photonic excitation into a charge separation. The D1/D2 (PsbA/PsbD) reaction center heterodimer binds P680, the primary electron donor of PSII as well as several subsequent electron acceptors. D2 is needed for assembly of a stable PSII complex. In Carica papaya (Papaya), this protein is Photosystem II D2 protein.